The following is a 435-amino-acid chain: Histidine--tRNA ligase (435 aa).

The interval 415–435 (SVPLSAFPGDYDRPTFEDFAE) is disordered. Residues 424-435 (DYDRPTFEDFAE) are compositionally biased toward basic and acidic residues.

The protein belongs to the class-II aminoacyl-tRNA synthetase family.

Its subcellular location is the cytoplasm. It carries out the reaction tRNA(His) + L-histidine + ATP = L-histidyl-tRNA(His) + AMP + diphosphate + H(+). The protein is Histidine--tRNA ligase of Haloarcula marismortui (strain ATCC 43049 / DSM 3752 / JCM 8966 / VKM B-1809) (Halobacterium marismortui).